Reading from the N-terminus, the 277-residue chain is MPHSNYETPEVILQYFAPNQDGTPPDANDLEIQYGTKNLHLAAVTLNDLRPDKDKITLTDHGLQLINHDTAMSYEDFNDPEKIKSQYYLEVAEAIKKATGAQKVICFNHNVRSEAAPRLDISKHKVDHIGPMRRVHVDVAPRGTYEAVEKRAGEALMSSIRGRWKIINSWKPLKTVQRDPLAIATGPSCPDEDLVELTRYRPDGSLSESRYSVLYDQRHKWYWVPMQKPNEMLLFNQYSDDPNRTLADRVAHCGFTLPGAEDKEIRESVEVRALVIY.

It belongs to the asaB hydroxylase/desaturase family.

It carries out the reaction 2-[(1R,8S,14R,15R)-11-hydroxy-14,15-bis[(6E)-oct-6-en-1-yl]-3,5,9-trioxo-4,10-dioxatetracyclo[9.4.0.0(2,6).0(8,12)]pentadeca-2(6),12-dien-8-yl]acetate + 3 2-oxoglutarate + 3 O2 = phomoidride A + 3 succinate + 3 CO2 + H2O. Functionally, alpha-ketoglutarate-dependent dioxygenase; part of the gene cluster that mediates the biosynthesis of the antihypercholesterolemic agents phomoidrides which are dimeric anhydrides. Within the pathway, tstK is responsible for the iterative oxidation necessary to convert prephomoidride to phomoidride A. The pathway begins with the highly reducing polyketide synthase tstiA that catalyzes the formation of a C12-fatty acyl-ACP, starting from one acetate and 5 malonate units. The hydrolase tstM is involved in the release of the C12-fatty acyl chain from phiA. The alkylcitrate synthase (ACS) tstJ and the alkylcitrate dehydratase (ACDH) tstI then give rise to decarboxylated monomeric anhydrides by coupling the C12-fatty acyl chain with oxalacetic acid. The cyclase tstC is responsible for the dimerization of the monomeric anhydrides which leads to the production of prephomoidride that contains the characteristic bicyclo[4.3.1]deca-1,6-diene system of phomoidrides. Iterative oxidation catalyzed by the alpha-ketoglutarate-dependent dioxygenase tstK produced then phomoidride A. Finally, the methyltransferase tstE converts phomoidride A to phomoidride B via an acetalization reaction. The phosphatidylethanolamine-binding protein tstB and tstN are not essential for dimerization and their functions have still to be determined. This is Alpha-ketoglutarate-dependent dioxygenase tstK from Talaromyces stipitatus (strain ATCC 10500 / CBS 375.48 / QM 6759 / NRRL 1006) (Penicillium stipitatum).